Here is a 123-residue protein sequence, read N- to C-terminus: Chondroitin proteoglycan 8 (123 aa).

Residues 1 to 16 (MRPFILLALLFSVAIA) form the signal peptide. A disordered region spans residues 32–123 (SVRRSTRGAD…SGSGDEAPAE (92 aa)). A compositionally biased stretch (basic and acidic residues) spans 38–60 (RGADKKADSSDSSDSNEKDDKVT). O-linked (Xyl...) (chondroitin sulfate) serine glycans are attached at residues Ser63 and Ser65. The span at 74 to 84 (EQLRRVARDVE) shows a compositional bias: basic and acidic residues. Ser87, Ser93, and Ser114 each carry an O-linked (Xyl...) (chondroitin sulfate) serine glycan.

In Caenorhabditis briggsae, this protein is Chondroitin proteoglycan 8 (cpg-8).